The primary structure comprises 150 residues: UPF0756 membrane protein YE1142 (150 aa).

4 helical membrane-spanning segments follow: residues 1–21 (MAALDPTLLILLVLAGLGIIS), 51–71 (YGLTIGILILTIGVMTPIASG), 88–108 (ILAIVVGVAVSWLGGRGVSLM), and 114–134 (VVAGLLVGTVLGVALFRGVPV).

The protein belongs to the UPF0756 family.

Its subcellular location is the cell membrane. The sequence is that of UPF0756 membrane protein YE1142 from Yersinia enterocolitica serotype O:8 / biotype 1B (strain NCTC 13174 / 8081).